Here is a 245-residue protein sequence, read N- to C-terminus: Chlorophyll a-b binding protein 1B-21, chloroplastic (245 aa).

A chloroplast-targeting transit peptide spans 1-44 (MASSSGLRSCSAVGVPSLLAPSSRSGRSGLPFCAYATTSGRVTM). Trp48 lines the chlorophyll b pocket. Chlorophyll a-binding residues include Phe68, Glu87, and His90. Arg92 is a binding site for chlorophyll b. A helical transmembrane segment spans residues 93–113 (WAMLCVPGVLVPEALGLGNWV). Residue Leu129 participates in chlorophyll a binding. The helical transmembrane segment at 132 to 152 (PVPWGNLPTILAIEFLAIAFA) threads the bilayer. 3 residues coordinate chlorophyll b: Val133, Glu153, and Arg156. Chlorophyll a is bound by residues Lys190, Glu191, Asn194, Arg196, Gln208, and His224.

The protein belongs to the light-harvesting chlorophyll a/b-binding (LHC) protein family. The LHC complex consists of chlorophyll a-b binding proteins. It depends on Binds at least 14 chlorophylls (8 Chl-a and 6 Chl-b) and carotenoids such as lutein and neoxanthin. as a cofactor. Photoregulated by reversible phosphorylation of its threonine residues.

The protein localises to the plastid. It is found in the chloroplast thylakoid membrane. The light-harvesting complex (LHC) functions as a light receptor, it captures and delivers excitation energy to photosystems with which it is closely associated. This Hordeum vulgare (Barley) protein is Chlorophyll a-b binding protein 1B-21, chloroplastic (LHC Ib-21).